We begin with the raw amino-acid sequence, 1330 residues long: Protein PUTATIVE RECOMBINATION INITIATION DEFECT 1 (1330 aa).

Residues 1310–1330 (REGRVSPIQEETRQMQTERIV) are disordered.

Interacts with SPO11-1. According to PubMed:28855712, may interact with SPO11-2; this is in contradiction with PubMed:9461215 which claims that it seems to not interact with SPO11-2. Binds to DFO, PRD3 and MTOPVIB. Facilitates an interaction between PRD3 and DFO. As to expression, expressed in flower buds.

It is found in the nucleus. Its function is as follows. Involved in DNA cleavage that forms the double-strand breaks (DSB) that initiate meiotic recombination. This is Protein PUTATIVE RECOMBINATION INITIATION DEFECT 1 from Arabidopsis thaliana (Mouse-ear cress).